Consider the following 402-residue polypeptide: Speedy protein E6 (402 aa).

The disordered stretch occupies residues 1–89 (MDRTETRFRK…EEPEKELAPE (89 aa)). Residues 16 to 39 (GKITTSRQPHPQNEQSPQRSTSGY) show a composition bias toward polar residues. Acidic residues predominate over residues 76-89 (DESEEEPEKELAPE).

This sequence belongs to the Speedy/Ringo family.

This chain is Speedy protein E6 (SPDYE6), found in Homo sapiens (Human).